A 266-amino-acid polypeptide reads, in one-letter code: Apoptosis regulator ced-9 (266 aa).

The tract at residues 1–58 (MVDSMDMANSSQNTFRRRTMATSEMREFLSTKDAEPNNFGMQTIPESPTPSTPTRRMS) is disordered. Positions 24-35 (EMREFLSTKDAE) are enriched in basic and acidic residues. A BH4 motif is present at residues 75 to 94 (IQGFVVDYFTYRIAQNGLDW). Positions 156 to 174 (NTPCPMSYGRLIGLISFGG) match the BH1 motif. The short motif at 208 to 223 (SWKEHNRSWADFMKLG) is the BH2 element.

It belongs to the Bcl-2 family. Interacts with asymmetric homodimer ced-4; the interaction sequesters ced-4. Interacts with egl-1; the interaction results in ced-4 release. Interacts with dre-1; the interaction inhibits ced-9 activity, either directly or indirectly. Interacts with dct-1. May form a complex composed of ced-9, ced-4 and mac-1.

The protein resides in the perikaryon. The protein localises to the synapse. It is found in the endomembrane system. Its subcellular location is the mitochondrion membrane. Functionally, plays a major role in programmed cell death (PCD, apoptosis). egl-1 binds to and directly inhibits the activity of ced-9, releasing the cell death activator ced-4 from a ced-9/ced-4 containing protein complex and allowing ced-4 to activate the cell-killing caspase ced-3. During larval development, required for the elimination of transient presynaptic components downstream of egl-1 and upstream of ced-4 and ced-3 apoptotic pathway. This Caenorhabditis briggsae protein is Apoptosis regulator ced-9 (ced-9).